Reading from the N-terminus, the 82-residue chain is Protein Vpu (82 aa).

Residues 1–7 lie on the Extracellular side of the membrane; that stretch reads MQPIPIV. Residues 8–28 traverse the membrane as a helical segment; the sequence is AIVALVVAIIIAIVVWSIVII. Topologically, residues 29-82 are cytoplasmic; that stretch reads EYRKILRQRKIDRLIDRLIERAEDSGNESEGEISALVEMGVEMGHHAPWDVDDL. Residues serine 53 and serine 57 each carry the phosphoserine; by host CK2 modification.

This sequence belongs to the HIV-1 VPU protein family. As to quaternary structure, homopentamer. Interacts with host CD4 and BRTC; these interactions induce proteasomal degradation of CD4. Interacts (via transmembrane region) with host BST2 (via transmembrane region); this interaction leads to the degradation of host BST2. Interacts with host FBXW11. Interacts with host AP1M1; this interaction plays a role in the mistrafficking and subsequent degradation of host BST2. Interacts with host RANBP2; this interaction allows Vpu to down-regulate host BLM sumoylation. Phosphorylated by host CK2. This phosphorylation is necessary for interaction with human BTRC and degradation of CD4.

Its subcellular location is the host membrane. With respect to regulation, ion channel activity is inhibited by hexamethylene amiloride in vitro. Functionally, enhances virion budding by targeting host CD4 and Tetherin/BST2 to proteasome degradation. Degradation of CD4 prevents any unwanted premature interactions between viral Env and its host receptor CD4 in the endoplasmic reticulum. Degradation of antiretroviral protein Tetherin/BST2 is important for virion budding, as BST2 tethers new viral particles to the host cell membrane. Mechanistically, Vpu bridges either CD4 or BST2 to BTRC, a substrate recognition subunit of the Skp1/Cullin/F-box protein E3 ubiquitin ligase, induces their ubiquitination and subsequent proteasomal degradation. The alteration of the E3 ligase specificity by Vpu seems to promote the degradation of host IKBKB, leading to NF-kappa-B down-regulation and subsequent apoptosis. Acts as a viroporin that forms an oligomeric ion channel in membranes. Modulates the host DNA repair mechanisms to promote degradation of nuclear viral cDNA in cells that are already productively infected in order to suppress immune sensing and proviral hyper-integration (superinfection). Manipulates PML-NBs and modulates SUMOylation of host BLM protein thereby enhancing its DNA-end processing activity toward viral unintegrated linear DNA. Also inhibits RAD52-mediated homologous repair of viral cDNA, preventing the generation of dead-end circular forms of single copies of the long terminal repeat and permitting sustained nucleolytic attack. The protein is Protein Vpu of Human immunodeficiency virus type 1 group M subtype B (isolate HXB2) (HIV-1).